We begin with the raw amino-acid sequence, 223 residues long: Deoxyribose-phosphate aldolase (223 aa).

The active-site Proton donor/acceptor is aspartate 91. Lysine 153 acts as the Schiff-base intermediate with acetaldehyde in catalysis. Residue lysine 182 is the Proton donor/acceptor of the active site.

The protein belongs to the DeoC/FbaB aldolase family. DeoC type 1 subfamily.

It localises to the cytoplasm. It carries out the reaction 2-deoxy-D-ribose 5-phosphate = D-glyceraldehyde 3-phosphate + acetaldehyde. It functions in the pathway carbohydrate degradation; 2-deoxy-D-ribose 1-phosphate degradation; D-glyceraldehyde 3-phosphate and acetaldehyde from 2-deoxy-alpha-D-ribose 1-phosphate: step 2/2. Functionally, catalyzes a reversible aldol reaction between acetaldehyde and D-glyceraldehyde 3-phosphate to generate 2-deoxy-D-ribose 5-phosphate. The chain is Deoxyribose-phosphate aldolase from Streptococcus pyogenes serotype M2 (strain MGAS10270).